The chain runs to 304 residues: Uricase (304 aa).

At A2 the chain carries N-acetylalanine. K10 and K23 each carry N6-acetyllysine; alternate. N6-succinyllysine; alternate is present on residues K10 and K23. The active-site Charge relay system is K23. 2 positions are modified to N6-acetyllysine: K27 and K36. Phosphoserine occurs at positions 39 and 63. The active-site Charge relay system is the T68. Urate is bound by residues T68 and D69. Residues K118, K122, and K164 each carry the N6-acetyllysine modification. F170 provides a ligand contact to urate. N6-acetyllysine occurs at positions 175 and 185. A urate-binding site is contributed by R187. N6-acetyllysine; alternate occurs at positions 221 and 228. An N6-succinyllysine; alternate mark is found at K221 and K228. Phosphoserine is present on S232. Urate contacts are provided by V235, Q236, and N262. The active-site Charge relay system is H264. K278 bears the N6-acetyllysine mark. Y289 bears the Phosphotyrosine mark. Residues 302–304 (SRL) carry the Microbody targeting signal motif.

Belongs to the uricase family. In terms of assembly, homotetramer.

The protein resides in the peroxisome. It carries out the reaction urate + O2 + H2O = 5-hydroxyisourate + H2O2. The protein operates within purine metabolism; urate degradation; (S)-allantoin from urate: step 1/3. Catalyzes the oxidation of uric acid to 5-hydroxyisourate, which is further processed to form (S)-allantoin. The sequence is that of Uricase (UOX) from Bos taurus (Bovine).